Here is a 314-residue protein sequence, read N- to C-terminus: NAC domain-containing protein 10 (314 aa).

Residues 18-39 (VSNTDHPSVQLKDQSQSCVTSR) show a composition bias toward polar residues. Disordered regions lie at residues 18–48 (VSNTDHPSVQLKDQSQSCVTSRPDSKISAET) and 150–182 (YTTGTRKRRKVSTDEEGHETRWHKTGKTRPVLS). In terms of domain architecture, NAC spans 77–236 (LPAGVKFDPS…EPVLSKVFYQ (160 aa)). The segment covering 160-171 (VSTDEEGHETRW) has biased composition (basic and acidic residues). The DNA-binding element occupies 187 to 242 (TGFKKILVLYTNYGRQKKPEKTNWVMHQYHLGSSEDEKDGEPVLSKVFYQTQPRQC).

In terms of tissue distribution, expressed in protoxylem and elongating interfascicular fiber cells of elongating internodes, developing metaxylem cells and interfascicular fibers of non-elongating internodes and developing secondary xylem of roots.

The protein resides in the nucleus. Transcriptional activator that plays a regulatory role in the development of secondary cell wall fibers. Is a direct target of SND1. The protein is NAC domain-containing protein 10 of Arabidopsis thaliana (Mouse-ear cress).